We begin with the raw amino-acid sequence, 94 residues long: Large ribosomal subunit protein bL27 (94 aa).

Residues 1–9 constitute a propeptide that is removed on maturation; the sequence is MLRLDLQFF.

The protein belongs to the bacterial ribosomal protein bL27 family. The N-terminus is cleaved by ribosomal processing cysteine protease Prp.

The chain is Large ribosomal subunit protein bL27 from Bacillus velezensis (strain DSM 23117 / BGSC 10A6 / LMG 26770 / FZB42) (Bacillus amyloliquefaciens subsp. plantarum).